A 134-amino-acid polypeptide reads, in one-letter code: Orexigenic neuropeptide QRFP (134 aa).

The N-terminal stretch at 1-18 is a signal peptide; it reads MRSPYSLPYLLFLPLGAC. Residues 19–88 constitute a propeptide that is removed on maturation; that stretch reads FPVLDTEEPV…RAGFQLRLGR (70 aa). Position 131 is a phenylalanine amide (Phe131).

This sequence belongs to the RFamide neuropeptide family. Ligand for the G-protein coupled receptor QRFPR/GPR103. As to expression, expressed in the hypothalamus.

Its subcellular location is the secreted. Stimulates feeding behavior, metabolic rate and locomotor activity and increases blood pressure. May have orexigenic activity. May promote aldosterone secretion by the adrenal gland. In Bos taurus (Bovine), this protein is Orexigenic neuropeptide QRFP.